Here is a 101-residue protein sequence, read N- to C-terminus: Small ribosomal subunit protein uS10 (101 aa).

This sequence belongs to the universal ribosomal protein uS10 family. In terms of assembly, part of the 30S ribosomal subunit.

Its function is as follows. Involved in the binding of tRNA to the ribosomes. This Rhodococcus erythropolis (strain PR4 / NBRC 100887) protein is Small ribosomal subunit protein uS10.